A 228-amino-acid polypeptide reads, in one-letter code: RNA-free ribonuclease P (228 aa).

Belongs to the HARP family.

The enzyme catalyses Endonucleolytic cleavage of RNA, removing 5'-extranucleotides from tRNA precursor.. Functionally, RNA-free RNase P that catalyzes the removal of the 5'-leader sequence from pre-tRNA to produce the mature 5'-terminus. In Methanopyrus kandleri (strain AV19 / DSM 6324 / JCM 9639 / NBRC 100938), this protein is RNA-free ribonuclease P.